The following is a 398-amino-acid chain: ATP-dependent RNA helicase eIF4A (398 aa).

The short motif at Asp-25–Gln-53 is the Q motif element. One can recognise a Helicase ATP-binding domain in the interval Ile-56–Ile-226. Ala-69–Thr-76 is an ATP binding site. The DEAD box signature appears at Asp-174–Asp-177. In terms of domain architecture, Helicase C-terminal spans Gly-237–Ile-398.

Belongs to the DEAD box helicase family. eIF4A subfamily. Component of the eIF4F complex, which composition varies with external and internal environmental conditions. It is composed of at least eIF4A, eIF4E and eIF4G.

The protein resides in the cytoplasm. It catalyses the reaction ATP + H2O = ADP + phosphate + H(+). ATP-dependent RNA helicase which is a subunit of the eIF4F complex involved in cap recognition and is required for mRNA binding to ribosome. In the current model of translation initiation, eIF4A unwinds RNA secondary structures in the 5'-UTR of mRNAs which is necessary to allow efficient binding of the small ribosomal subunit, and subsequent scanning for the initiator codon. This Emericella nidulans (strain FGSC A4 / ATCC 38163 / CBS 112.46 / NRRL 194 / M139) (Aspergillus nidulans) protein is ATP-dependent RNA helicase eIF4A (tif1).